Consider the following 246-residue polypeptide: Uroporphyrinogen-III synthase (246 aa).

It belongs to the uroporphyrinogen-III synthase family. As to quaternary structure, monomer.

It carries out the reaction hydroxymethylbilane = uroporphyrinogen III + H2O. It participates in porphyrin-containing compound metabolism; protoporphyrin-IX biosynthesis; coproporphyrinogen-III from 5-aminolevulinate: step 3/4. In terms of biological role, catalyzes cyclization of the linear tetrapyrrole, hydroxymethylbilane, to the macrocyclic uroporphyrinogen III. This Escherichia coli (strain K12) protein is Uroporphyrinogen-III synthase (hemD).